Consider the following 955-residue polypeptide: 2-oxoglutarate dehydrogenase E1 component (955 aa).

This sequence belongs to the alpha-ketoglutarate dehydrogenase family. As to quaternary structure, homodimer. Part of the 2-oxoglutarate dehydrogenase (OGDH) complex composed of E1 (2-oxoglutarate dehydrogenase), E2 (dihydrolipoamide succinyltransferase) and E3 (dihydrolipoamide dehydrogenase); the complex contains multiple copies of the three enzymatic components (E1, E2 and E3). Requires thiamine diphosphate as cofactor.

It carries out the reaction N(6)-[(R)-lipoyl]-L-lysyl-[protein] + 2-oxoglutarate + H(+) = N(6)-[(R)-S(8)-succinyldihydrolipoyl]-L-lysyl-[protein] + CO2. Its function is as follows. E1 component of the 2-oxoglutarate dehydrogenase (OGDH) complex which catalyzes the decarboxylation of 2-oxoglutarate, the first step in the conversion of 2-oxoglutarate to succinyl-CoA and CO(2). The protein is 2-oxoglutarate dehydrogenase E1 component of Bacillus mycoides (strain KBAB4) (Bacillus weihenstephanensis).